The following is a 486-amino-acid chain: UDP-N-acetylmuramate--L-alanine ligase (486 aa).

Gly-123–Thr-129 lines the ATP pocket.

It belongs to the MurCDEF family.

Its subcellular location is the cytoplasm. The catalysed reaction is UDP-N-acetyl-alpha-D-muramate + L-alanine + ATP = UDP-N-acetyl-alpha-D-muramoyl-L-alanine + ADP + phosphate + H(+). It participates in cell wall biogenesis; peptidoglycan biosynthesis. Functionally, cell wall formation. This is UDP-N-acetylmuramate--L-alanine ligase from Pseudomonas fluorescens (strain Pf0-1).